The sequence spans 931 residues: Protein translocase subunit SecA (931 aa).

ATP contacts are provided by residues Q87, G105–T109, and D515. C915, C917, C926, and H927 together coordinate Zn(2+).

This sequence belongs to the SecA family. Monomer and homodimer. Part of the essential Sec protein translocation apparatus which comprises SecA, SecYEG and auxiliary proteins SecDF-YajC and YidC. It depends on Zn(2+) as a cofactor.

The protein localises to the cell inner membrane. Its subcellular location is the cytoplasm. It catalyses the reaction ATP + H2O + cellular proteinSide 1 = ADP + phosphate + cellular proteinSide 2.. Its function is as follows. Part of the Sec protein translocase complex. Interacts with the SecYEG preprotein conducting channel. Has a central role in coupling the hydrolysis of ATP to the transfer of proteins into and across the cell membrane, serving both as a receptor for the preprotein-SecB complex and as an ATP-driven molecular motor driving the stepwise translocation of polypeptide chains across the membrane. In Burkholderia ambifaria (strain MC40-6), this protein is Protein translocase subunit SecA.